The following is a 426-amino-acid chain: Histidine--tRNA ligase (426 aa).

Belongs to the class-II aminoacyl-tRNA synthetase family. In terms of assembly, homodimer.

It localises to the cytoplasm. It carries out the reaction tRNA(His) + L-histidine + ATP = L-histidyl-tRNA(His) + AMP + diphosphate + H(+). The chain is Histidine--tRNA ligase from Shewanella baltica (strain OS195).